We begin with the raw amino-acid sequence, 341 residues long: Elongation factor G (341 aa).

Belongs to the GTP-binding elongation factor family. EF-G/EF-2 subfamily.

It localises to the cytoplasm. Functionally, catalyzes the GTP-dependent ribosomal translocation step during translation elongation. During this step, the ribosome changes from the pre-translocational (PRE) to the post-translocational (POST) state as the newly formed A-site-bound peptidyl-tRNA and P-site-bound deacylated tRNA move to the P and E sites, respectively. Catalyzes the coordinated movement of the two tRNA molecules, the mRNA and conformational changes in the ribosome. The polypeptide is Elongation factor G (fus) (Streptomyces ramocissimus).